Here is a 1241-residue protein sequence, read N- to C-terminus: Anion exchange protein 2 (1241 aa).

Residues 1–240 form a disordered region; it reads MSSAPRRPAK…RSYNLQERRR (240 aa). Residues 1–707 are Cytoplasmic-facing; sequence MSSAPRRPAK…SDFRDALDPQ (707 aa). Basic and acidic residues-rich tracts occupy residues 37 to 49 and 58 to 75; these read ELHRTLGVERFEE and GGEEPGRSYGEEDFEYHR. Basic residues-rich tracts occupy residues 76–85 and 94–110; these read QSSHHIHHPL and RRRKTPQGPGRKPRRRP. A phosphoserine mark is found at Ser-113, Ser-132, Ser-144, Ser-170, Ser-172, and Ser-173. Over residues 120 to 133 the composition is skewed to acidic residues; that stretch reads TIEEGEEDEDEASE. Over residues 141–155 the composition is skewed to low complexity; sequence TQPSPVSTPSSVQFF. Residue Thr-183 is modified to Phosphothreonine. The span at 189–209 shows a compositional bias: low complexity; it reads GAQAGTQVEEAEAEAVAVASG. The segment covering 210 to 219 has biased composition (gly residues); it reads TAGGDDGGAS. A Phosphoserine modification is found at Ser-243. Thr-257 is subject to Phosphothreonine. The residue at position 274 (Lys-274) is an N6-methyllysine. The interval 288–320 is disordered; the sequence is LVRKNAKGSTQSGREGREPGPTPRARPRAPHKP. Ser-443 is modified (phosphoserine). The segment at 449 to 471 is disordered; it reads SLLGHHHGQGAESDPHVTEPLMG. The next 4 membrane-spanning stretches (helical) occupy residues 708-731, 737-774, 784-816, and 826-847; these read CLAAVIFIYFAALSPAITFGGLLG, LIGVSELIMSTALQGVVFCLLGAQPLLVIGFSGPLLVF, SNHLEYLVGRVWIGFWLVFLALLMVALEGSFLV, and IFAFLISLIFIYETFYKLVKIF. The interval 708-1241 is membrane (anion exchange); that stretch reads CLAAVIFIYF…DEYNEMPMPV (534 aa). Topologically, residues 848-900 are extracellular; that stretch reads QEHPLHGCSASNSSEVDGGENMTWAGARPTLGPGNRSLAGQSGQGKPRGQPNT. N-linked (GlcNAc...) asparagine glycosylation is found at Asn-859, Asn-868, and Asn-882. A helical transmembrane segment spans residues 901-918; that stretch reads ALLSLVLMAGTFFIAFFL. The Cytoplasmic segment spans residues 919–933; sequence RKFKNSRFFPGRIRR. 5 helical membrane-spanning segments follow: residues 934–954, 988–1010, 1036–1059, 1091–1136, and 1163–1199; these read VIGDFGVPIAILIMVLVDYSI, PFPVWMMVASLLPAILVFILIFM, LLLIVAMGGICALFGLPWLAAATV, VTGL…IQFY, and MHLFTALQLLCLALLWAVMSTAASLAFPFILILTVPL. Cys-1173 carries the S-palmitoyl cysteine lipid modification.

Belongs to the anion exchanger (TC 2.A.31) family. Expressed in the liver, stomach, kidney, prostate, thyroid and rectum. In terms of tissue distribution, expressed in the liver and kidney.

It localises to the apical cell membrane. The protein localises to the basolateral cell membrane. The enzyme catalyses hydrogencarbonate(in) + chloride(out) = hydrogencarbonate(out) + chloride(in). In terms of biological role, sodium-independent anion exchanger which mediates the electroneutral exchange of chloride for bicarbonate ions across the cell membrane. Plays an important role in osteoclast differentiation and function. Regulates bone resorption and calpain-dependent actin cytoskeleton organization in osteoclasts via anion exchange-dependent control of pH. Essential for intracellular pH regulation in CD8(+) T-cells upon CD3 stimulation, modulating CD8(+) T-cell responses. This Homo sapiens (Human) protein is Anion exchange protein 2 (SLC4A2).